Consider the following 361-residue polypeptide: Chorismate synthase (361 aa).

Arg-48 and Arg-54 together coordinate NADP(+). FMN is bound by residues 125-127 (RSS), 238-239 (NA), Gly-278, 293-297 (KPTSS), and Arg-319.

Belongs to the chorismate synthase family. Homotetramer. FMNH2 serves as cofactor.

It carries out the reaction 5-O-(1-carboxyvinyl)-3-phosphoshikimate = chorismate + phosphate. It functions in the pathway metabolic intermediate biosynthesis; chorismate biosynthesis; chorismate from D-erythrose 4-phosphate and phosphoenolpyruvate: step 7/7. Catalyzes the anti-1,4-elimination of the C-3 phosphate and the C-6 proR hydrogen from 5-enolpyruvylshikimate-3-phosphate (EPSP) to yield chorismate, which is the branch point compound that serves as the starting substrate for the three terminal pathways of aromatic amino acid biosynthesis. This reaction introduces a second double bond into the aromatic ring system. The protein is Chorismate synthase of Yersinia pseudotuberculosis serotype O:1b (strain IP 31758).